A 472-amino-acid chain; its full sequence is MFEVVIGLEVHTQLNTKTKIFCSCATSFGEAPNTNVCPTCLALPGALPVLNEEAVKKAIAFGKAVNAAINKKSVFNRKNYFYPDLPKAYQISQFDIPIVEKGELFINVKGENKRIGITRAHLEEDAGKNIHENNFSKVDLNRAGTPLLEIVSEPELRSSDEAVAYLKKLHSIIRFLDISDANMQEGSFRCDANVSIRPKGDTKLYTRVEIKNLNSFRFIQKAIEYEVKRQSEAWEDGTYEQEVVQETRLFDTTNLVTRSMRGKEEAAEYRYFPDPDLLPVLLKDEFLDIKIPELPDEKKARFIDELGIKESDAEVLISSLEMSRFFESLISQNLNPKLCVNWLNTELMGLLKGELTIENSPVDAQKLGVLIKRIEDGTISAKAAKDVLAFVFENTSVEIDEAIEKLGLKQVSDDSAIEAVIEQILNANANKVAEYKSGKDKLFGFFVGQTMKEGKGAFNPAKVNEILKTKLG.

It belongs to the GatB/GatE family. GatB subfamily. Heterotrimer of A, B and C subunits.

It catalyses the reaction L-glutamyl-tRNA(Gln) + L-glutamine + ATP + H2O = L-glutaminyl-tRNA(Gln) + L-glutamate + ADP + phosphate + H(+). It carries out the reaction L-aspartyl-tRNA(Asn) + L-glutamine + ATP + H2O = L-asparaginyl-tRNA(Asn) + L-glutamate + ADP + phosphate + 2 H(+). In terms of biological role, allows the formation of correctly charged Asn-tRNA(Asn) or Gln-tRNA(Gln) through the transamidation of misacylated Asp-tRNA(Asn) or Glu-tRNA(Gln) in organisms which lack either or both of asparaginyl-tRNA or glutaminyl-tRNA synthetases. The reaction takes place in the presence of glutamine and ATP through an activated phospho-Asp-tRNA(Asn) or phospho-Glu-tRNA(Gln). This chain is Aspartyl/glutamyl-tRNA(Asn/Gln) amidotransferase subunit B, found in Campylobacter jejuni subsp. jejuni serotype O:23/36 (strain 81-176).